A 496-amino-acid polypeptide reads, in one-letter code: Angiopoietin-2 (496 aa).

Residues 1 to 18 (MWQIIFLTFGWDLVLASA) form the signal peptide. 6 N-linked (GlcNAc...) asparagine glycosylation sites follow: N89, N119, N133, N151, N240, and N304. A coiled-coil region spans residues 159-256 (QLLQHSISTN…QQHDLMETVN (98 aa)). The Fibrinogen C-terminal domain maps to 275–495 (KEEQTTFRDC…ATTMMIRPAD (221 aa)). A disulfide bridge links C284 with C313. Residues D429, D431, C433, and C435 each coordinate Ca(2+). Cystine bridges form between C433-C435 and C437-C450.

In terms of assembly, interacts with TEK/TIE2, competing for the same binding site as ANGPT1. Interacts with ITGA5. Interacts with SVEP1/polydom. Interacts with THBD; this interaction significantly inhibits the generation of activated PC and TAFIa/CPB2 by the thrombin/thrombomodulin complex. Expressed in the ovary, uterus and placenta.

Its subcellular location is the secreted. Functionally, binds to TEK/TIE2, competing for the ANGPT1 binding site, and modulating ANGPT1 signaling. Can induce tyrosine phosphorylation of TEK/TIE2 in the absence of ANGPT1. In the absence of angiogenic inducers, such as VEGF, ANGPT2-mediated loosening of cell-matrix contacts may induce endothelial cell apoptosis with consequent vascular regression. In concert with VEGF, it may facilitate endothelial cell migration and proliferation, thus serving as a permissive angiogenic signal. Involved in the regulation of lymphangiogenesis. This Mus musculus (Mouse) protein is Angiopoietin-2 (Angpt2).